Consider the following 255-residue polypeptide: Hemin import ATP-binding protein HmuV (255 aa).

The ABC transporter domain maps to Leu2 to Glu238. ATP is bound at residue Gly34–Ser41.

This sequence belongs to the ABC transporter superfamily. Heme (hemin) importer (TC 3.A.1.14.5) family. The complex is composed of two ATP-binding proteins (HmuV), two transmembrane proteins (HmuU) and a solute-binding protein (HmuT).

The protein resides in the cell inner membrane. Functionally, part of the ABC transporter complex HmuTUV involved in hemin import. Responsible for energy coupling to the transport system. The polypeptide is Hemin import ATP-binding protein HmuV (Pseudomonas aeruginosa (strain ATCC 15692 / DSM 22644 / CIP 104116 / JCM 14847 / LMG 12228 / 1C / PRS 101 / PAO1)).